The following is a 61-amino-acid chain: Large ribosomal subunit protein uL30 (61 aa).

It belongs to the universal ribosomal protein uL30 family. In terms of assembly, part of the 50S ribosomal subunit.

In Bifidobacterium adolescentis (strain ATCC 15703 / DSM 20083 / NCTC 11814 / E194a), this protein is Large ribosomal subunit protein uL30.